A 62-amino-acid chain; its full sequence is Large ribosomal subunit protein bL28 (62 aa).

This sequence belongs to the bacterial ribosomal protein bL28 family.

This Streptococcus agalactiae serotype Ia (strain ATCC 27591 / A909 / CDC SS700) protein is Large ribosomal subunit protein bL28.